Reading from the N-terminus, the 873-residue chain is Protein SEY1 (873 aa).

The disordered stretch occupies residues Met1–His21. The Cytoplasmic portion of the chain corresponds to Met1–Gln749. The GB1/RHD3-type G domain maps to Gly49–Ala307. Gly59–Ser66 provides a ligand contact to GTP. Positions Ser482–Glu506 form a coiled coil. Residues Leu676–Asp703 form a disordered region. Residues Ala690–Asp703 show a composition bias toward acidic residues. The helical transmembrane segment at Val750 to Leu770 threads the bilayer. Residues Arg771–Pro773 lie on the Lumenal side of the membrane. A helical membrane pass occupies residues Val774–Leu794. Residues Trp795–Phe873 are Cytoplasmic-facing. Residues Arg828–Phe873 form a disordered region. Residues Ala839–Asp863 show a composition bias toward basic and acidic residues. A compositionally biased stretch (acidic residues) spans Glu864–Phe873.

The protein belongs to the TRAFAC class dynamin-like GTPase superfamily. GB1/RHD3 GTPase family. RHD3 subfamily.

It localises to the endoplasmic reticulum membrane. Cooperates with the reticulon proteins and tubule-shaping DP1 family proteins to generate and maintain the structure of the tubular endoplasmic reticulum network. Has GTPase activity, which is required for its function in ER organization. In Ajellomyces capsulatus (strain G186AR / H82 / ATCC MYA-2454 / RMSCC 2432) (Darling's disease fungus), this protein is Protein SEY1.